Consider the following 700-residue polypeptide: pH-response regulator protein palI/prr-5 (700 aa).

At 1–8 (MLRPATPL) the chain is on the cytoplasmic side. A helical membrane pass occupies residues 9-29 (AVLLFAAFGLLTLATISTPII). Residues 30-90 (KQIPLSSFEI…PRATRSTLSS (61 aa)) are Extracellular-facing. Residues 91-111 (ILIVHPVAALITLINFVLAIV) form a helical membrane-spanning segment. Topologically, residues 112-123 (AHFHSPSHSARY) are cytoplasmic. A helical transmembrane segment spans residues 124 to 144 (LLILFIVSFVDFIVCLLCFLV). Over 145–152 (DVLLFIPH) the chain is Extracellular. Residues 153–173 (LSWGSYIVVAATILVAFCGLV) traverse the membrane as a helical segment. Residues 174–700 (TCAMRRTLVN…GNMPRAAGPR (527 aa)) are Cytoplasmic-facing. Disordered regions lie at residues 226–491 (SGAN…GIRD), 507–560 (VPDP…PISE), and 573–700 (DVDP…AGPR). Basic and acidic residues predominate over residues 234–252 (KLPEFTTFEKKDDRSEERI). Over residues 320–378 (GRGGMPPGGYRGRGGFPGPGRGGGPPQNGRGGYGPPGRGRGGYGPPPRGYGGPGPRGGR) the composition is skewed to gly residues. Positions 414 to 424 (SPYANRQQSPG) are enriched in polar residues. Polar residues-rich tracts occupy residues 593–603 (SMQSPPASNSY) and 615–637 (ESENSNFTSISQRGINPRWNSAN). The span at 657-671 (VVPRRPVNRPGAGPA) shows a compositional bias: low complexity.

This sequence belongs to the palI/RIM9 family.

It is found in the cell membrane. Required for the proteolytic cleavage of the transcription factor pacc-1 in response to alkaline ambient pH. This Neurospora crassa (strain ATCC 24698 / 74-OR23-1A / CBS 708.71 / DSM 1257 / FGSC 987) protein is pH-response regulator protein palI/prr-5 (prr-5).